We begin with the raw amino-acid sequence, 176 residues long: Nucleoside triphosphate/diphosphate phosphatase (176 aa).

The active-site Proton donor is Arg23. The Mg(2+) site is built by Asn87, Asp103, Asp105, Asp107, Asp120, and Glu123.

The protein belongs to the Ntdp family. It depends on Mg(2+) as a cofactor.

It catalyses the reaction a ribonucleoside 5'-triphosphate + H2O = a ribonucleoside 5'-diphosphate + phosphate + H(+). The catalysed reaction is a ribonucleoside 5'-diphosphate + H2O = a ribonucleoside 5'-phosphate + phosphate + H(+). Its function is as follows. Has nucleoside phosphatase activity towards nucleoside triphosphates and nucleoside diphosphates. This chain is Nucleoside triphosphate/diphosphate phosphatase, found in Bacillus cytotoxicus (strain DSM 22905 / CIP 110041 / 391-98 / NVH 391-98).